Consider the following 287-residue polypeptide: ATP synthase gamma chain (287 aa).

It belongs to the ATPase gamma chain family. In terms of assembly, F-type ATPases have 2 components, CF(1) - the catalytic core - and CF(0) - the membrane proton channel. CF(1) has five subunits: alpha(3), beta(3), gamma(1), delta(1), epsilon(1). CF(0) has three main subunits: a, b and c.

The protein resides in the cell inner membrane. Produces ATP from ADP in the presence of a proton gradient across the membrane. The gamma chain is believed to be important in regulating ATPase activity and the flow of protons through the CF(0) complex. The polypeptide is ATP synthase gamma chain (Proteus mirabilis (strain HI4320)).